A 491-amino-acid chain; its full sequence is Adenylosuccinate synthetase, chloroplastic (491 aa).

Residues 78–84 (GDEGKGK) and 106–108 (GHT) contribute to the GTP site. The active-site Proton acceptor is the aspartate 79. Residues aspartate 79 and glycine 106 each contribute to the Mg(2+) site. IMP is bound by residues 79-82 (DEGK), 104-107 (NAGH), threonine 196, arginine 210, glutamine 290, threonine 305, and arginine 369. Histidine 107 (proton donor) is an active-site residue. 365–371 (TTTGRPR) is a substrate binding site. GTP-binding positions include arginine 371, 397-399 (KLD), and 480-482 (GIG).

The protein belongs to the adenylosuccinate synthetase family. In terms of assembly, homodimer. The cofactor is Mg(2+).

The protein localises to the plastid. Its subcellular location is the chloroplast. It carries out the reaction IMP + L-aspartate + GTP = N(6)-(1,2-dicarboxyethyl)-AMP + GDP + phosphate + 2 H(+). It participates in purine metabolism; AMP biosynthesis via de novo pathway; AMP from IMP: step 1/2. Its function is as follows. Plays an important role in the de novo pathway and in the salvage pathway of purine nucleotide biosynthesis. Catalyzes the first committed step in the biosynthesis of AMP from IMP. The chain is Adenylosuccinate synthetase, chloroplastic from Populus trichocarpa (Western balsam poplar).